The primary structure comprises 431 residues: Phosphomethylpyrimidine synthase (431 aa).

Residues Asn-66, Met-95, Tyr-124, His-163, 185 to 187 (SRG), 226 to 229 (DGLR), and Glu-265 contribute to the substrate site. His-269 contacts Zn(2+). Residue Tyr-292 participates in substrate binding. His-333 is a binding site for Zn(2+). [4Fe-4S] cluster is bound by residues Cys-408, Cys-411, and Cys-415.

Belongs to the ThiC family. Requires [4Fe-4S] cluster as cofactor.

It catalyses the reaction 5-amino-1-(5-phospho-beta-D-ribosyl)imidazole + S-adenosyl-L-methionine = 4-amino-2-methyl-5-(phosphooxymethyl)pyrimidine + CO + 5'-deoxyadenosine + formate + L-methionine + 3 H(+). The protein operates within cofactor biosynthesis; thiamine diphosphate biosynthesis. In terms of biological role, catalyzes the synthesis of the hydroxymethylpyrimidine phosphate (HMP-P) moiety of thiamine from aminoimidazole ribotide (AIR) in a radical S-adenosyl-L-methionine (SAM)-dependent reaction. The polypeptide is Phosphomethylpyrimidine synthase (Dehalococcoides mccartyi (strain CBDB1)).